The following is a 70-amino-acid chain: Small ribosomal subunit protein bS21 (70 aa).

The protein belongs to the bacterial ribosomal protein bS21 family.

This Nitratidesulfovibrio vulgaris (strain ATCC 29579 / DSM 644 / CCUG 34227 / NCIMB 8303 / VKM B-1760 / Hildenborough) (Desulfovibrio vulgaris) protein is Small ribosomal subunit protein bS21.